Reading from the N-terminus, the 221-residue chain is Cyclin-U3-1 (221 aa).

The protein belongs to the cyclin family. Cyclin U/P subfamily. Interacts with CDKA-1 and CDKB1-1. In terms of tissue distribution, expressed in roots, stems and flowers. Expressed in the shoot apex, leaf primordia and young leaves.

The chain is Cyclin-U3-1 (CYCU3-1) from Arabidopsis thaliana (Mouse-ear cress).